Consider the following 146-residue polypeptide: Large ribosomal subunit protein uL15 (146 aa).

Residues 1–54 (MKLHELKPAAGSRKAPKRVGRGTGSGLGRNAGKGEKGQNARSGGGVRPGFEGGQ) form a disordered region. Gly residues-rich tracts occupy residues 21–31 (RGTGSGLGRNA) and 42–52 (SGGGVRPGFEG).

It belongs to the universal ribosomal protein uL15 family. In terms of assembly, part of the 50S ribosomal subunit.

Binds to the 23S rRNA. The polypeptide is Large ribosomal subunit protein uL15 (Clostridium acetobutylicum (strain ATCC 824 / DSM 792 / JCM 1419 / IAM 19013 / LMG 5710 / NBRC 13948 / NRRL B-527 / VKM B-1787 / 2291 / W)).